Here is a 442-residue protein sequence, read N- to C-terminus: uncharacterized protein (442 aa).

Helical transmembrane passes span 209 to 229 (FNIW…AYFY), 247 to 267 (IFFL…HTFS), 284 to 304 (VGIS…AFVC), 308 to 328 (LRFI…YTPW), 342 to 362 (IFFF…MFYI), 374 to 394 (PVFK…LHIP), and 402 to 422 (FDII…GVAF).

The protein resides in the membrane. This is an uncharacterized protein from Schizosaccharomyces pombe (strain 972 / ATCC 24843) (Fission yeast).